A 96-amino-acid chain; its full sequence is Essential MCU regulator, mitochondrial (96 aa).

Residues 1–34 (MIVSRLTFPLQAAKLVARKAAGNPSNSIIQRRHM) constitute a mitochondrion transit peptide. The helical transmembrane segment at 52–72 (PFGLFAIFCAVIPGLFIGATI) threads the bilayer.

It belongs to the SMDT1/EMRE family.

Its subcellular location is the mitochondrion inner membrane. Its function is as follows. Essential regulatory subunit of the mitochondrial calcium uniporter (mcu) channel, a protein that mediates calcium uptake into mitochondria. The chain is Essential MCU regulator, mitochondrial from Drosophila pseudoobscura pseudoobscura (Fruit fly).